The sequence spans 225 residues: Flagellar transcriptional regulator FlhC (225 aa).

Zn(2+)-binding residues include cysteine 149, cysteine 152, cysteine 169, and cysteine 172.

It belongs to the FlhC family. In terms of assembly, heterohexamer composed of two FlhC and four FlhD subunits. Each FlhC binds a FlhD dimer, forming a heterotrimer, and a hexamer assembles by dimerization of two heterotrimers. Requires Zn(2+) as cofactor.

It localises to the cytoplasm. In terms of biological role, functions in complex with FlhD as a master transcriptional regulator that regulates transcription of several flagellar and non-flagellar operons by binding to their promoter region. Activates expression of class 2 flagellar genes, including fliA, which is a flagellum-specific sigma factor that turns on the class 3 genes. Also regulates genes whose products function in a variety of physiological pathways. This chain is Flagellar transcriptional regulator FlhC, found in Burkholderia lata (strain ATCC 17760 / DSM 23089 / LMG 22485 / NCIMB 9086 / R18194 / 383).